The sequence spans 203 residues: N-(5'-phosphoribosyl)anthranilate isomerase (203 aa).

It belongs to the TrpF family.

It catalyses the reaction N-(5-phospho-beta-D-ribosyl)anthranilate = 1-(2-carboxyphenylamino)-1-deoxy-D-ribulose 5-phosphate. It participates in amino-acid biosynthesis; L-tryptophan biosynthesis; L-tryptophan from chorismate: step 3/5. This Geobacter sulfurreducens (strain ATCC 51573 / DSM 12127 / PCA) protein is N-(5'-phosphoribosyl)anthranilate isomerase.